A 370-amino-acid polypeptide reads, in one-letter code: Probable G-protein coupled receptor 85 (370 aa).

Topologically, residues 1–25 (MANYSHAADNILQNLSPLTAFLKLT) are extracellular. An N-linked (GlcNAc...) asparagine glycan is attached at N3. A helical membrane pass occupies residues 26-46 (SLGFIIGVSVVGNLLISILLV). Residues 47–57 (KDKTLHRAPYY) lie on the Cytoplasmic side of the membrane. Residues 58 to 78 (FLLDLCCSDILRSAICFPFVF) traverse the membrane as a helical segment. The Extracellular portion of the chain corresponds to 79 to 96 (NSVKNGSTWTYGTLTCKV). The N-linked (GlcNAc...) asparagine glycan is linked to N83. Cysteines 94 and 172 form a disulfide. A helical transmembrane segment spans residues 97 to 117 (IAFLGVLSCFHTAFMLFCISV). Residues 118 to 137 (TRYLAIAHHRFYTKRLTFWT) are Cytoplasmic-facing. The chain crosses the membrane as a helical span at residues 138–158 (CLAVICMVWTLSVAMAFPPVL). Topologically, residues 159–188 (DVGTYSFIREEDQCTFQHRSFRANDSLGFM) are extracellular. An N-linked (GlcNAc...) asparagine glycan is attached at N182. Residues 189–209 (LLLALILLATQLVYLKLIFFV) traverse the membrane as a helical segment. The Cytoplasmic segment spans residues 210–286 (HDRRKMKPVQ…FKMEKRISRM (77 aa)). The chain crosses the membrane as a helical span at residues 287–307 (FYIMTFLFLTLWGPYLVACYW). The Extracellular portion of the chain corresponds to 308-313 (RVFARG). The chain crosses the membrane as a helical span at residues 314-334 (PVVPGGFLTAAVWMSFAQAGI). Over 335–370 (NPFVCIFSNRELRRCFSTTLLYCRKSRLPREPYCVI) the chain is Cytoplasmic.

Belongs to the G-protein coupled receptor 1 family. Interacts with DLG4 and DLG3. As to expression, highly expressed in brain and testis. Lower levels in small intestine, placenta and spleen. In brain regions, detected in all regions tested, but somewhat lower levels in the corpus callosum, medulla and spinal cord.

It localises to the cell membrane. The protein resides in the endoplasmic reticulum. Functionally, orphan receptor. The chain is Probable G-protein coupled receptor 85 (GPR85) from Homo sapiens (Human).